Consider the following 62-residue polypeptide: Large ribosomal subunit protein bL28 (62 aa).

Belongs to the bacterial ribosomal protein bL28 family.

In Streptococcus equi subsp. equi (strain 4047), this protein is Large ribosomal subunit protein bL28.